Consider the following 474-residue polypeptide: UDP-N-acetylmuramate--L-alanine ligase (474 aa).

Residue 122 to 128 participates in ATP binding; the sequence is GTHGKTT.

Belongs to the MurCDEF family.

Its subcellular location is the cytoplasm. The enzyme catalyses UDP-N-acetyl-alpha-D-muramate + L-alanine + ATP = UDP-N-acetyl-alpha-D-muramoyl-L-alanine + ADP + phosphate + H(+). Its pathway is cell wall biogenesis; peptidoglycan biosynthesis. Cell wall formation. This is UDP-N-acetylmuramate--L-alanine ligase from Saccharophagus degradans (strain 2-40 / ATCC 43961 / DSM 17024).